Consider the following 153-residue polypeptide: Small heat shock protein HspB (153 aa).

The 111-residue stretch at 30 to 140 (AGTEDNYPPC…KPRRISISGS (111 aa)) folds into the sHSP domain.

The protein belongs to the small heat shock protein (HSP20) family.

This Bradyrhizobium diazoefficiens (strain JCM 10833 / BCRC 13528 / IAM 13628 / NBRC 14792 / USDA 110) protein is Small heat shock protein HspB (hspB).